Here is a 201-residue protein sequence, read N- to C-terminus: Recombination protein RecR (201 aa).

The C4-type zinc-finger motif lies at 59-74 (CEICGNMDTENICCIC). Residues 82–177 (SVIAVVETVA…KISRLASGIP (96 aa)) enclose the Toprim domain.

The protein belongs to the RecR family.

Functionally, may play a role in DNA repair. It seems to be involved in an RecBC-independent recombinational process of DNA repair. It may act with RecF and RecO. The chain is Recombination protein RecR from Rickettsia felis (strain ATCC VR-1525 / URRWXCal2) (Rickettsia azadi).